The following is a 346-amino-acid chain: Methionine import ATP-binding protein MetN 1 (346 aa).

Positions 2 to 241 (IELKNVSKVF…PQHVTTKKFV (240 aa)) constitute an ABC transporter domain. 38-45 (GYSGAGKS) contacts ATP.

This sequence belongs to the ABC transporter superfamily. Methionine importer (TC 3.A.1.24) family. As to quaternary structure, the complex is composed of two ATP-binding proteins (MetN), two transmembrane proteins (MetI) and a solute-binding protein (MetQ).

Its subcellular location is the cell membrane. It catalyses the reaction L-methionine(out) + ATP + H2O = L-methionine(in) + ADP + phosphate + H(+). It carries out the reaction D-methionine(out) + ATP + H2O = D-methionine(in) + ADP + phosphate + H(+). Functionally, part of the ABC transporter complex MetNIQ involved in methionine import. Responsible for energy coupling to the transport system. This Bacillus cereus (strain ZK / E33L) protein is Methionine import ATP-binding protein MetN 1.